The primary structure comprises 298 residues: Proline iminopeptidase (298 aa).

The AB hydrolase-1 domain occupies 26–277 (VLLLHGGPAM…NGSHLAMWDD (252 aa)). S103 functions as the Nucleophile in the catalytic mechanism. Residue D244 is part of the active site. H271 functions as the Proton donor in the catalytic mechanism.

It belongs to the peptidase S33 family. Monomer.

The catalysed reaction is Release of N-terminal proline from a peptide.. In terms of biological role, releases the N-terminal proline from various substrates. Cleaves specifically Pro-betaNA and small peptides containing proline at the amino terminal. No activity against hydroxyproline-betaNA. The sequence is that of Proline iminopeptidase (fpaP) from Elizabethkingia meningoseptica (Chryseobacterium meningosepticum).